Consider the following 577-residue polypeptide: uncharacterized protein (577 aa).

Composition is skewed to polar residues over residues 1-21 (MSST…QSAS) and 68-87 (SFQN…SKTE). Disordered regions lie at residues 1 to 24 (MSST…SAHP) and 68 to 93 (SFQN…PDDV). Helical transmembrane passes span 139-159 (CILA…AVPA), 174-194 (LLTM…WAPL), 204-224 (ILIG…GKDI), 232-252 (FFAG…LADM), 262-282 (ITLF…VGGF), 292-312 (WTEY…YLFC), 367-387 (PICF…YLLL), 402-422 (MGVA…GSGI), 447-467 (LPPM…LSWS), 473-493 (VNWV…LLIF), 504-526 (YLFR…AAGF), and 543-563 (GSLL…FFFF).

This sequence belongs to the major facilitator superfamily. CAR1 family.

It is found in the endoplasmic reticulum. Its subcellular location is the membrane. This is an uncharacterized protein from Schizosaccharomyces pombe (strain 972 / ATCC 24843) (Fission yeast).